A 405-amino-acid polypeptide reads, in one-letter code: NADH-quinone oxidoreductase subunit D (405 aa).

It belongs to the complex I 49 kDa subunit family. In terms of assembly, NDH-1 is composed of 14 different subunits. Subunits NuoB, C, D, E, F, and G constitute the peripheral sector of the complex.

The protein localises to the cell inner membrane. The enzyme catalyses a quinone + NADH + 5 H(+)(in) = a quinol + NAD(+) + 4 H(+)(out). In terms of biological role, NDH-1 shuttles electrons from NADH, via FMN and iron-sulfur (Fe-S) centers, to quinones in the respiratory chain. The immediate electron acceptor for the enzyme in this species is believed to be ubiquinone. Couples the redox reaction to proton translocation (for every two electrons transferred, four hydrogen ions are translocated across the cytoplasmic membrane), and thus conserves the redox energy in a proton gradient. The sequence is that of NADH-quinone oxidoreductase subunit D from Sphingopyxis alaskensis (strain DSM 13593 / LMG 18877 / RB2256) (Sphingomonas alaskensis).